The chain runs to 534 residues: MVRPEDFNSLELDNSLTDGETVHEMMAHKAGLTYNDFNILPGFINFGVHDVSLETNITKDLKIKAPLVSSPMDTVTESGMAIVMALYGGIGIIHGNFPKPEDQAAEVLKVKRFKQGYVMQPHCLSRDSTAFDMIQIKKKYGYTGAPVTEDGRVGSKLIGMVTSRDFDFITMDVAGQKGTPISDTNDVTPTTPITRIMVSVDQLHLGHINDAPELSQKKLKEHRLGKLPIVNDNGELCALLCRSDLLKARDYPMASYDSKGQLLCGAAVNTRGESQYTVDRVVEAGVDVLIIDSSNGSSTYQISMLRYIKEKHPHVQVIAGNVVTRAQAKLLIDQGADGLRIGMGSGSICITQDVMAVGRAQGTAVYDVARYANQRGIPIVADGGIRDVGYITKAISLGASAVMMGGLLAATTEAPGEYFWGPGGVRVKKYRGMGSLDAMEAHASSQDRYFTAESDQIKVAQGVSATMKDRGSCHKFIPYLIRGVQHGMQDIGVRSLRDFREKVDNGIVKFERRSTNAQLEGGVHSLHSFEKRLY.

CBS domains lie at Tyr-117–Ile-181 and Thr-190–Ser-255. Residues Asp-292–Ser-294 and Gly-342–Gly-344 contribute to the NAD(+) site. K(+)-binding residues include Gly-344 and Gly-346. Ser-347 lines the IMP pocket. Cys-349 contacts K(+). Cys-349 acts as the Thioimidate intermediate in catalysis. IMP contacts are provided by residues Asp-382 to Gly-384, Gly-405 to Gly-406, and Tyr-430 to Gly-434. Arg-448 acts as the Proton acceptor in catalysis. Gln-461 is an IMP binding site. The K(+) site is built by Glu-520, Gly-521, and Gly-522.

It belongs to the IMPDH/GMPR family. Homotetramer. K(+) is required as a cofactor.

It localises to the cytoplasm. The catalysed reaction is IMP + NAD(+) + H2O = XMP + NADH + H(+). Its pathway is purine metabolism; XMP biosynthesis via de novo pathway; XMP from IMP: step 1/1. With respect to regulation, mycophenolic acid (MPA) is a non-competitive inhibitor that prevents formation of the closed enzyme conformation by binding to the same site as the amobile flap. In contrast, mizoribine monophosphate (MZP) is a competitive inhibitor that induces the closed conformation. MPA is a potent inhibitor of mammalian IMPDHs but a poor inhibitor of the bacterial enzymes. MZP is a more potent inhibitor of bacterial IMPDH. Functionally, catalyzes the conversion of inosine 5'-phosphate (IMP) to xanthosine 5'-phosphate (XMP), the first committed and rate-limiting step in the de novo synthesis of guanine nucleotides, and therefore plays an important role in the regulation of cell growth. The chain is Inosine-5'-monophosphate dehydrogenase from Caenorhabditis elegans.